Here is a 101-residue protein sequence, read N- to C-terminus: Large ribosomal subunit protein uL24 (101 aa).

Belongs to the universal ribosomal protein uL24 family. As to quaternary structure, part of the 50S ribosomal subunit.

Functionally, one of two assembly initiator proteins, it binds directly to the 5'-end of the 23S rRNA, where it nucleates assembly of the 50S subunit. In terms of biological role, one of the proteins that surrounds the polypeptide exit tunnel on the outside of the subunit. In Ligilactobacillus salivarius (strain UCC118) (Lactobacillus salivarius), this protein is Large ribosomal subunit protein uL24.